Consider the following 214-residue polypeptide: Probable transaldolase (214 aa).

Residue lysine 83 is the Schiff-base intermediate with substrate of the active site.

The protein belongs to the transaldolase family. Type 3B subfamily.

Its subcellular location is the cytoplasm. The catalysed reaction is D-sedoheptulose 7-phosphate + D-glyceraldehyde 3-phosphate = D-erythrose 4-phosphate + beta-D-fructose 6-phosphate. It functions in the pathway carbohydrate degradation; pentose phosphate pathway; D-glyceraldehyde 3-phosphate and beta-D-fructose 6-phosphate from D-ribose 5-phosphate and D-xylulose 5-phosphate (non-oxidative stage): step 2/3. Its function is as follows. Transaldolase is important for the balance of metabolites in the pentose-phosphate pathway. This Geotalea daltonii (strain DSM 22248 / JCM 15807 / FRC-32) (Geobacter daltonii) protein is Probable transaldolase.